The following is a 185-amino-acid chain: Ribosome-recycling factor (185 aa).

This sequence belongs to the RRF family.

The protein resides in the cytoplasm. Its function is as follows. Responsible for the release of ribosomes from messenger RNA at the termination of protein biosynthesis. May increase the efficiency of translation by recycling ribosomes from one round of translation to another. This is Ribosome-recycling factor from Pseudomonas paraeruginosa (strain DSM 24068 / PA7) (Pseudomonas aeruginosa (strain PA7)).